The sequence spans 269 residues: Energy-coupling factor transporter transmembrane protein EcfT (269 aa).

6 consecutive transmembrane segments (helical) span residues 45 to 65 (RFFL…RVSL), 75 to 95 (VLWL…GEAI), 110 to 130 (MAAL…LLTL), 153 to 173 (FPAH…PTLL), 202 to 222 (FVPV…DLAL), and 244 to 264 (CLED…LLFL).

Belongs to the energy-coupling factor EcfT family. As to quaternary structure, forms a stable energy-coupling factor (ECF) transporter complex composed of 2 membrane-embedded substrate-binding proteins (S component), 2 ATP-binding proteins (A component) and 2 transmembrane proteins (T component). May be able to interact with more than 1 S component at a time.

The protein resides in the cell membrane. Functionally, transmembrane (T) component of an energy-coupling factor (ECF) ABC-transporter complex. Unlike classic ABC transporters this ECF transporter provides the energy necessary to transport a number of different substrates. The sequence is that of Energy-coupling factor transporter transmembrane protein EcfT from Thermanaerovibrio acidaminovorans (strain ATCC 49978 / DSM 6589 / Su883) (Selenomonas acidaminovorans).